A 171-amino-acid chain; its full sequence is Neudesin (171 aa).

The first 30 residues, 1-30 (MARPAPWWRLRLLAALVLALALVPVPSAWA), serve as a signal peptide directing secretion. In terms of domain architecture, Cytochrome b5 heme-binding spans 43–128 (VRLFTEEELA…KELEALDDVF (86 aa)). N6-acetyllysine is present on K135.

It belongs to the cytochrome b5 family. MAPR subfamily. As to quaternary structure, interacts with PINK1 and PARK7. As to expression, in the embryo, expressed most abundantly in brain and spinal cord. Widely expressed in adult tissues including brain, heart, lung and kidney. In brain, expressed in neurons but not in glial cells. In the hypothalamus is expressed primarily in the paraventricular nucleus (PVN), with lower levels of expression in the arcuate nucleus (ARC).

It is found in the secreted. The protein resides in the extracellular space. The protein localises to the mitochondrion. It localises to the endoplasmic reticulum. In terms of biological role, acts as a neurotrophic factor in postnatal mature neurons, enhancing neuronal survival. Promotes cell proliferation and neurogenesis in undifferentiated neural pro-genitor cells at the embryonic stage and inhibits differentiation of astrocytes. Its neurotrophic activity is exerted via MAPK1/ERK2, MAPK3/ERK1 and AKT1/AKT pathways. Neurotrophic activity is enhanced by binding to heme. Also acts as an anorexigenic neurotrophic factor that contributes to energy balance. The protein is Neudesin of Mus musculus (Mouse).